We begin with the raw amino-acid sequence, 966 residues long: Glycine dehydrogenase (decarboxylating) (966 aa).

Lysine 713 bears the N6-(pyridoxal phosphate)lysine mark.

This sequence belongs to the GcvP family. The glycine cleavage system is composed of four proteins: P, T, L and H. Requires pyridoxal 5'-phosphate as cofactor.

It catalyses the reaction N(6)-[(R)-lipoyl]-L-lysyl-[glycine-cleavage complex H protein] + glycine + H(+) = N(6)-[(R)-S(8)-aminomethyldihydrolipoyl]-L-lysyl-[glycine-cleavage complex H protein] + CO2. Its function is as follows. The glycine cleavage system catalyzes the degradation of glycine. The P protein binds the alpha-amino group of glycine through its pyridoxal phosphate cofactor; CO(2) is released and the remaining methylamine moiety is then transferred to the lipoamide cofactor of the H protein. The sequence is that of Glycine dehydrogenase (decarboxylating) from Shewanella halifaxensis (strain HAW-EB4).